A 129-amino-acid chain; its full sequence is UPF0225 protein XC_4246 (129 aa).

This sequence belongs to the UPF0225 family.

This Xanthomonas campestris pv. campestris (strain 8004) protein is UPF0225 protein XC_4246.